Consider the following 569-residue polypeptide: Urease subunit alpha (569 aa).

Ni(2+) is bound by residues histidine 136, histidine 138, and lysine 219. Lysine 219 bears the N6-carboxylysine mark. Histidine 221 serves as a coordination point for substrate. Positions 248 and 274 each coordinate Ni(2+). The active-site Proton donor is histidine 322. Ni(2+) is bound at residue aspartate 362.

Belongs to the metallo-dependent hydrolases superfamily. Urease alpha subunit family. In terms of assembly, heterotrimer of UreA (gamma), UreB (beta) and UreC (alpha) subunits. Three heterotrimers associate to form the active enzyme. It depends on Ni cation as a cofactor. Carboxylation allows a single lysine to coordinate two nickel ions.

Its subcellular location is the cytoplasm. It carries out the reaction urea + 2 H2O + H(+) = hydrogencarbonate + 2 NH4(+). It participates in nitrogen metabolism; urea degradation; CO(2) and NH(3) from urea (urease route): step 1/1. The chain is Urease subunit alpha from Dinoroseobacter shibae (strain DSM 16493 / NCIMB 14021 / DFL 12).